We begin with the raw amino-acid sequence, 1690 residues long: DNA-directed RNA polymerase subunit beta' (1690 aa).

Residues C63, C65, C78, and C81 each contribute to the Zn(2+) site. Residues D753, D755, and D757 each contribute to the Mg(2+) site. Residues C1107, C1295, C1302, and C1305 each coordinate Zn(2+).

This sequence belongs to the RNA polymerase beta' chain family. In terms of assembly, the RNAP catalytic core consists of 2 alpha, 1 beta, 1 beta' and 1 omega subunit. When a sigma factor is associated with the core the holoenzyme is formed, which can initiate transcription. Requires Mg(2+) as cofactor. It depends on Zn(2+) as a cofactor.

It catalyses the reaction RNA(n) + a ribonucleoside 5'-triphosphate = RNA(n+1) + diphosphate. DNA-dependent RNA polymerase catalyzes the transcription of DNA into RNA using the four ribonucleoside triphosphates as substrates. This chain is DNA-directed RNA polymerase subunit beta', found in Thermotoga maritima (strain ATCC 43589 / DSM 3109 / JCM 10099 / NBRC 100826 / MSB8).